Consider the following 318-residue polypeptide: Thiohydrolase aneE (318 aa).

The protein belongs to the polyketide transferase af380 family.

It catalyses the reaction aculene D + L-prolyl-[peptidyl-carrier protein] = aculene B + holo-[peptidyl-carrier protein]. The catalysed reaction is aculene C + L-prolyl-[peptidyl-carrier protein] = aculene A + holo-[peptidyl-carrier protein]. It functions in the pathway secondary metabolite biosynthesis. Its function is as follows. Thiohydrolase; part of the gene cluster that mediates the biosynthesis of aculenes, a unique type of norsesquiterpenes that contain a nordaucane skeleton linked to an L-proline moiety and are of mixed biosynthetic origin. The pathway begins with the synthesis of dauca-4,7-diene by the terpene cyclase aneC using farnesyl pyrophosphate (FPP) as substrate. The cytochrome P450 monooxygenase aneF then performs the initial oxidation at C-12 of dauca-4,7-diene to yield asperaculane D. Asperaculane D is substrate of the cytochrome P450 monooxygenase aneD for C-10 hydroxylation to yield asperaculane E. The cytochrome P450 monooxygenase aneG then converts asperaculane E into aculene D via C-2 oxidation. The monomodular nonribosomal peptide synthtase aneB adenylates L-proline and the thiohydrolase aneE transfers this activated L-proline derivative to aculenes D and C to produce respectively aculenes B and A. The dioxygenase aneA converts aculene D into aculene C, and aculene B into aculene A by introducing the 5,6-alkene moiety. Asperculanes A, B, C and F, as well as 14-prolyl asperculane C, might be shunt products of the pathway. The sequence is that of Thiohydrolase aneE from Aspergillus aculeatus (strain ATCC 16872 / CBS 172.66 / WB 5094).